Here is a 356-residue protein sequence, read N- to C-terminus: Phosphate acyltransferase (356 aa).

Belongs to the PlsX family. Homodimer. Probably interacts with PlsY.

The protein resides in the cytoplasm. It catalyses the reaction a fatty acyl-[ACP] + phosphate = an acyl phosphate + holo-[ACP]. Its pathway is lipid metabolism; phospholipid metabolism. Its function is as follows. Catalyzes the reversible formation of acyl-phosphate (acyl-PO(4)) from acyl-[acyl-carrier-protein] (acyl-ACP). This enzyme utilizes acyl-ACP as fatty acyl donor, but not acyl-CoA. The chain is Phosphate acyltransferase from Shigella flexneri serotype 5b (strain 8401).